The sequence spans 406 residues: uncharacterized protein (406 aa).

To S.pombe SpAC12C2.04.

The protein resides in the cytoplasm. Its subcellular location is the nucleus. This is an uncharacterized protein from Schizosaccharomyces pombe (strain 972 / ATCC 24843) (Fission yeast).